A 290-amino-acid polypeptide reads, in one-letter code: 4-hydroxybenzoate octaprenyltransferase (290 aa).

A run of 8 helical transmembrane segments spans residues 23-43 (IGAL…TPGM), 46-66 (LWIL…GCVV), 99-119 (LFVV…AMTI), 141-161 (LPQV…FAAV), 163-183 (ESLP…AVAY), 212-232 (TLII…IGWL), 233-253 (NGLG…FVYQ), and 268-288 (AFMN…MSYW).

This sequence belongs to the UbiA prenyltransferase family. It depends on Mg(2+) as a cofactor.

The protein localises to the cell inner membrane. The enzyme catalyses all-trans-octaprenyl diphosphate + 4-hydroxybenzoate = 4-hydroxy-3-(all-trans-octaprenyl)benzoate + diphosphate. It participates in cofactor biosynthesis; ubiquinone biosynthesis. Catalyzes the prenylation of para-hydroxybenzoate (PHB) with an all-trans polyprenyl group. Mediates the second step in the final reaction sequence of ubiquinone-8 (UQ-8) biosynthesis, which is the condensation of the polyisoprenoid side chain with PHB, generating the first membrane-bound Q intermediate 3-octaprenyl-4-hydroxybenzoate. This is 4-hydroxybenzoate octaprenyltransferase from Salmonella paratyphi C (strain RKS4594).